The following is a 457-amino-acid chain: UDP-N-acetylmuramoylalanine--D-glutamate ligase (457 aa).

116-122 contributes to the ATP binding site; that stretch reads GTNGKTT.

The protein belongs to the MurCDEF family.

It is found in the cytoplasm. The catalysed reaction is UDP-N-acetyl-alpha-D-muramoyl-L-alanine + D-glutamate + ATP = UDP-N-acetyl-alpha-D-muramoyl-L-alanyl-D-glutamate + ADP + phosphate + H(+). It functions in the pathway cell wall biogenesis; peptidoglycan biosynthesis. Functionally, cell wall formation. Catalyzes the addition of glutamate to the nucleotide precursor UDP-N-acetylmuramoyl-L-alanine (UMA). The sequence is that of UDP-N-acetylmuramoylalanine--D-glutamate ligase from Caldicellulosiruptor bescii (strain ATCC BAA-1888 / DSM 6725 / KCTC 15123 / Z-1320) (Anaerocellum thermophilum).